The sequence spans 124 residues: Phosphoribosyl-ATP pyrophosphatase (124 aa).

It belongs to the PRA-PH family.

It is found in the cytoplasm. The enzyme catalyses 1-(5-phospho-beta-D-ribosyl)-ATP + H2O = 1-(5-phospho-beta-D-ribosyl)-5'-AMP + diphosphate + H(+). Its pathway is amino-acid biosynthesis; L-histidine biosynthesis; L-histidine from 5-phospho-alpha-D-ribose 1-diphosphate: step 2/9. This chain is Phosphoribosyl-ATP pyrophosphatase, found in Ralstonia pickettii (strain 12J).